The following is a 332-amino-acid chain: Phosphate acyltransferase (332 aa).

Belongs to the PlsX family. In terms of assembly, homodimer. Probably interacts with PlsY.

It is found in the cytoplasm. It carries out the reaction a fatty acyl-[ACP] + phosphate = an acyl phosphate + holo-[ACP]. It functions in the pathway lipid metabolism; phospholipid metabolism. In terms of biological role, catalyzes the reversible formation of acyl-phosphate (acyl-PO(4)) from acyl-[acyl-carrier-protein] (acyl-ACP). This enzyme utilizes acyl-ACP as fatty acyl donor, but not acyl-CoA. The chain is Phosphate acyltransferase from Sulfurimonas denitrificans (strain ATCC 33889 / DSM 1251) (Thiomicrospira denitrificans (strain ATCC 33889 / DSM 1251)).